The sequence spans 246 residues: Ribonuclease PH (246 aa).

Phosphate contacts are provided by residues Arg91 and 129–131; that span reads GTR.

The protein belongs to the RNase PH family. In terms of assembly, homohexameric ring arranged as a trimer of dimers.

The enzyme catalyses tRNA(n+1) + phosphate = tRNA(n) + a ribonucleoside 5'-diphosphate. Its function is as follows. Phosphorolytic 3'-5' exoribonuclease that plays an important role in tRNA 3'-end maturation. Removes nucleotide residues following the 3'-CCA terminus of tRNAs; can also add nucleotides to the ends of RNA molecules by using nucleoside diphosphates as substrates, but this may not be physiologically important. Probably plays a role in initiation of 16S rRNA degradation (leading to ribosome degradation) during starvation. The chain is Ribonuclease PH from Burkholderia vietnamiensis (strain G4 / LMG 22486) (Burkholderia cepacia (strain R1808)).